Consider the following 190-residue polypeptide: Ribose 1,5-bisphosphate phosphokinase PhnN (190 aa).

19–26 is an ATP binding site; it reads GPSGVGKD.

The protein belongs to the ribose 1,5-bisphosphokinase family.

The enzyme catalyses alpha-D-ribose 1,5-bisphosphate + ATP = 5-phospho-alpha-D-ribose 1-diphosphate + ADP. It participates in metabolic intermediate biosynthesis; 5-phospho-alpha-D-ribose 1-diphosphate biosynthesis; 5-phospho-alpha-D-ribose 1-diphosphate from D-ribose 5-phosphate (route II): step 3/3. In terms of biological role, catalyzes the phosphorylation of ribose 1,5-bisphosphate to 5-phospho-D-ribosyl alpha-1-diphosphate (PRPP). This chain is Ribose 1,5-bisphosphate phosphokinase PhnN, found in Ruegeria sp. (strain TM1040) (Silicibacter sp.).